Reading from the N-terminus, the 197-residue chain is Nucleoid occlusion factor SlmA (197 aa).

The HTH tetR-type domain occupies 7-67 (ISRREHILQC…GLIEFIEDSL (61 aa)). The segment at residues 30 to 49 (TTAKLAAEVGVSEAALYRHF) is a DNA-binding region (H-T-H motif).

Belongs to the nucleoid occlusion factor SlmA family. In terms of assembly, homodimer. Interacts with FtsZ.

Its subcellular location is the cytoplasm. It localises to the nucleoid. Functionally, required for nucleoid occlusion (NO) phenomenon, which prevents Z-ring formation and cell division over the nucleoid. Acts as a DNA-associated cell division inhibitor that binds simultaneously chromosomal DNA and FtsZ, and disrupts the assembly of FtsZ polymers. SlmA-DNA-binding sequences (SBS) are dispersed on non-Ter regions of the chromosome, preventing FtsZ polymerization at these regions. The sequence is that of Nucleoid occlusion factor SlmA from Shewanella amazonensis (strain ATCC BAA-1098 / SB2B).